The primary structure comprises 513 residues: t-SNARE domain-containing protein 1 (513 aa).

Disordered stretches follow at residues 1–23 (MSYG…GPSR) and 49–128 (ESKL…KPNF). A compositionally biased stretch (gly residues) spans 7 to 19 (ARGGGLGSRGPFG). Ser-378 carries the phosphoserine modification. Residues 416–478 (LEAIRLREEA…EAARQLLAGA (63 aa)) enclose the t-SNARE coiled-coil homology domain. The helical transmembrane segment at 491–511 (CFLSAGVTALLVIIIIIATSV) threads the bilayer.

The protein resides in the membrane. The polypeptide is t-SNARE domain-containing protein 1 (TSNARE1) (Homo sapiens (Human)).